We begin with the raw amino-acid sequence, 422 residues long: Protein arginine methyltransferase NDUFAF7, mitochondrial (422 aa).

The transit peptide at 1 to 28 (MRTLLRLKRLMPEVLWTKRSCSSSSINK) directs the protein to the mitochondrion.

It belongs to the NDUFAF7 family.

The protein localises to the mitochondrion. The catalysed reaction is L-arginyl-[protein] + 2 S-adenosyl-L-methionine = N(omega),N(omega)'-dimethyl-L-arginyl-[protein] + 2 S-adenosyl-L-homocysteine + 2 H(+). Functionally, arginine methyltransferase involved in the assembly or stability of mitochondrial NADH:ubiquinone oxidoreductase complex (complex I). Acts by mediating symmetric dimethylation of 'Arg-118' of ndufs2 after it assembles into the complex I, stabilizing the early intermediate complex. The chain is Protein arginine methyltransferase NDUFAF7, mitochondrial from Danio rerio (Zebrafish).